The chain runs to 676 residues: RNA helicase NPH-II (676 aa).

One can recognise a Helicase ATP-binding domain in the interval 172–347 (FSAWISHRPV…VFLPNPAFIH (176 aa)). Residue 185-192 (GGTGVGKT) participates in ATP binding. The short motif at 296–299 (DEVH) is the DEXH box element. Residues 366-535 (NPSSRMAYIE…NYILYANKFN (170 aa)) form the Helicase C-terminal domain.

It belongs to the DEAD box helicase family. DEAH subfamily. As to quaternary structure, monomer.

The protein resides in the virion. It catalyses the reaction ATP + H2O = ADP + phosphate + H(+). Its function is as follows. NTP-dependent helicase that catalyzes unidirectional unwinding of 3'tailed duplex RNAs and plays an important role during transcription of early mRNAs, presumably by preventing R-loop formation behind the elongating RNA polymerase. Might also play a role in the export of newly synthesized mRNA chains out of the core into the cytoplasm. Required for replication and propagation of viral particles. This chain is RNA helicase NPH-II (OPG084), found in Homo sapiens (Human).